We begin with the raw amino-acid sequence, 239 residues long: Ribonuclease PH (239 aa).

Phosphate contacts are provided by residues Arg-86 and 124-126 (GTR).

This sequence belongs to the RNase PH family. In terms of assembly, homohexameric ring arranged as a trimer of dimers.

It carries out the reaction tRNA(n+1) + phosphate = tRNA(n) + a ribonucleoside 5'-diphosphate. In terms of biological role, phosphorolytic 3'-5' exoribonuclease that plays an important role in tRNA 3'-end maturation. Removes nucleotide residues following the 3'-CCA terminus of tRNAs; can also add nucleotides to the ends of RNA molecules by using nucleoside diphosphates as substrates, but this may not be physiologically important. Probably plays a role in initiation of 16S rRNA degradation (leading to ribosome degradation) during starvation. The sequence is that of Ribonuclease PH from Rhizobium leguminosarum bv. trifolii (strain WSM2304).